Here is a 118-residue protein sequence, read N- to C-terminus: Thioredoxin H-type 2 (118 aa).

Positions 2–113 constitute a Thioredoxin domain; it reads AEEGQVIGVH…LQQTIAKHIS (112 aa). Catalysis depends on nucleophile residues C39 and C42. C39 and C42 are joined by a disulfide.

This sequence belongs to the thioredoxin family. Plant H-type subfamily.

The protein localises to the cytoplasm. In terms of biological role, participates in various redox reactions through the reversible oxidation of the active center dithiol to a disulfide. The H form is known to activate a number of cytosolic enzymes. The polypeptide is Thioredoxin H-type 2 (Nicotiana tabacum (Common tobacco)).